The following is a 227-amino-acid chain: Cytochrome c oxidase subunit 2 (227 aa).

Topologically, residues 1-14 (MAYPFQLGLQDATS) are mitochondrial intermembrane. A helical transmembrane segment spans residues 15-45 (PIMEELTSFHDHTLMIVFLISSLVLYIILLM). Over 46–59 (LTTKLTHTSTMDAQ) the chain is Mitochondrial matrix. A helical membrane pass occupies residues 60–87 (EVETIWTILPAVILILIALPSLRILYMM). Over 88 to 227 (DEINNPALTV…HFENWSASMI (140 aa)) the chain is Mitochondrial intermembrane. The Cu cation site is built by H161, C196, E198, C200, H204, and M207. E198 is a binding site for Mg(2+).

Belongs to the cytochrome c oxidase subunit 2 family. As to quaternary structure, component of the cytochrome c oxidase (complex IV, CIV), a multisubunit enzyme composed of 14 subunits. The complex is composed of a catalytic core of 3 subunits MT-CO1, MT-CO2 and MT-CO3, encoded in the mitochondrial DNA, and 11 supernumerary subunits COX4I, COX5A, COX5B, COX6A, COX6B, COX6C, COX7A, COX7B, COX7C, COX8 and NDUFA4, which are encoded in the nuclear genome. The complex exists as a monomer or a dimer and forms supercomplexes (SCs) in the inner mitochondrial membrane with NADH-ubiquinone oxidoreductase (complex I, CI) and ubiquinol-cytochrome c oxidoreductase (cytochrome b-c1 complex, complex III, CIII), resulting in different assemblies (supercomplex SCI(1)III(2)IV(1) and megacomplex MCI(2)III(2)IV(2)). Found in a complex with TMEM177, COA6, COX18, COX20, SCO1 and SCO2. Interacts with TMEM177 in a COX20-dependent manner. Interacts with COX20. Interacts with COX16. Cu cation serves as cofactor.

Its subcellular location is the mitochondrion inner membrane. It catalyses the reaction 4 Fe(II)-[cytochrome c] + O2 + 8 H(+)(in) = 4 Fe(III)-[cytochrome c] + 2 H2O + 4 H(+)(out). Component of the cytochrome c oxidase, the last enzyme in the mitochondrial electron transport chain which drives oxidative phosphorylation. The respiratory chain contains 3 multisubunit complexes succinate dehydrogenase (complex II, CII), ubiquinol-cytochrome c oxidoreductase (cytochrome b-c1 complex, complex III, CIII) and cytochrome c oxidase (complex IV, CIV), that cooperate to transfer electrons derived from NADH and succinate to molecular oxygen, creating an electrochemical gradient over the inner membrane that drives transmembrane transport and the ATP synthase. Cytochrome c oxidase is the component of the respiratory chain that catalyzes the reduction of oxygen to water. Electrons originating from reduced cytochrome c in the intermembrane space (IMS) are transferred via the dinuclear copper A center (CU(A)) of subunit 2 and heme A of subunit 1 to the active site in subunit 1, a binuclear center (BNC) formed by heme A3 and copper B (CU(B)). The BNC reduces molecular oxygen to 2 water molecules using 4 electrons from cytochrome c in the IMS and 4 protons from the mitochondrial matrix. The sequence is that of Cytochrome c oxidase subunit 2 (MT-CO2) from Anisomys imitator (Uneven-toothed rat).